The primary structure comprises 118 residues: Transcriptional regulator WhiB4 (118 aa).

In terms of domain architecture, 4Fe-4S Wbl-type spans 36–92 (LCRTTDPDELFVRGAAQRKAAVICRHCPVMQECAADALDNKVEFGVWGGMTERQRRA). C37, C59, C62, and C68 together coordinate [4Fe-4S] cluster. 2 cysteine pairs are disulfide-bonded: C37/C68 and C59/C62.

This sequence belongs to the WhiB family. [4Fe-4S] cluster serves as cofactor. In terms of processing, the Fe-S cluster can be nitrosylated by nitric oxide (NO). Post-translationally, upon Fe-S cluster removal intramolecular disulfide bonds are formed.

It localises to the cytoplasm. In terms of biological role, acts as a transcriptional regulator. Probably redox-responsive. The apo- but not holo-form probably binds DNA. This Mycobacterium tuberculosis (strain CDC 1551 / Oshkosh) protein is Transcriptional regulator WhiB4 (whiB4).